A 249-amino-acid chain; its full sequence is Electron transfer flavoprotein subunit beta (249 aa).

It belongs to the ETF beta-subunit/FixA family. Heterodimer of an alpha and a beta subunit. It depends on FAD as a cofactor. The cofactor is AMP.

The electron transfer flavoprotein serves as a specific electron acceptor for other dehydrogenases. It transfers the electrons to the main respiratory chain via ETF-ubiquinone oxidoreductase (ETF dehydrogenase). This chain is Electron transfer flavoprotein subunit beta (etfB), found in Pseudomonas aeruginosa (strain ATCC 15692 / DSM 22644 / CIP 104116 / JCM 14847 / LMG 12228 / 1C / PRS 101 / PAO1).